A 398-amino-acid polypeptide reads, in one-letter code: Na(+)/H(+) antiporter NhaA (398 aa).

11 helical membrane passes run 19 to 39 (IGGI…NSPG), 64 to 84 (LLLW…GLEL), 99 to 119 (IILP…IYLA), 130 to 150 (GWAI…SLLG), 159 to 179 (ILLT…IACF), 182 to 202 (NDIY…LFIV), 222 to 242 (IAML…AMFI), 266 to 286 (ATFI…LTNI), 299 to 319 (IALG…WVGV), 337 to 357 (GMSA…SLAF), and 370 to 390 (LGII…LNKT).

Belongs to the NhaA Na(+)/H(+) (TC 2.A.33) antiporter family.

The protein localises to the cell inner membrane. It catalyses the reaction Na(+)(in) + 2 H(+)(out) = Na(+)(out) + 2 H(+)(in). Its function is as follows. Na(+)/H(+) antiporter that extrudes sodium in exchange for external protons. The protein is Na(+)/H(+) antiporter NhaA of Desulfotalea psychrophila (strain LSv54 / DSM 12343).